The sequence spans 144 residues: Cytochrome c-type biogenesis protein CcmE (144 aa).

At 1 to 7 the chain is on the cytoplasmic side; it reads MKPRHKR. The chain crosses the membrane as a helical; Signal-anchor for type II membrane protein span at residues 8-28; the sequence is ALIIIAALIAIGVAALLILNA. The Periplasmic segment spans residues 29 to 144; the sequence is LNSNIALYVT…DQAQKNGSAK (116 aa). His-121 and Tyr-125 together coordinate heme.

This sequence belongs to the CcmE/CycJ family.

It is found in the cell inner membrane. Its function is as follows. Heme chaperone required for the biogenesis of c-type cytochromes. Transiently binds heme delivered by CcmC and transfers the heme to apo-cytochromes in a process facilitated by CcmF and CcmH. The sequence is that of Cytochrome c-type biogenesis protein CcmE from Polynucleobacter necessarius subsp. necessarius (strain STIR1).